A 120-amino-acid polypeptide reads, in one-letter code: Large ribosomal subunit protein uL18 (120 aa).

This sequence belongs to the universal ribosomal protein uL18 family. Part of the 50S ribosomal subunit; part of the 5S rRNA/L5/L18/L25 subcomplex. Contacts the 5S and 23S rRNAs.

Functionally, this is one of the proteins that bind and probably mediate the attachment of the 5S RNA into the large ribosomal subunit, where it forms part of the central protuberance. This is Large ribosomal subunit protein uL18 from Methylobacterium radiotolerans (strain ATCC 27329 / DSM 1819 / JCM 2831 / NBRC 15690 / NCIMB 10815 / 0-1).